The chain runs to 275 residues: Hydroxyethylthiazole kinase (275 aa).

Position 53 (M53) interacts with substrate. Residues R128 and S174 each contribute to the ATP site. Position 201 (G201) interacts with substrate.

This sequence belongs to the Thz kinase family. Mg(2+) serves as cofactor.

It catalyses the reaction 5-(2-hydroxyethyl)-4-methylthiazole + ATP = 4-methyl-5-(2-phosphooxyethyl)-thiazole + ADP + H(+). The protein operates within cofactor biosynthesis; thiamine diphosphate biosynthesis; 4-methyl-5-(2-phosphoethyl)-thiazole from 5-(2-hydroxyethyl)-4-methylthiazole: step 1/1. Its function is as follows. Catalyzes the phosphorylation of the hydroxyl group of 4-methyl-5-beta-hydroxyethylthiazole (THZ). The chain is Hydroxyethylthiazole kinase from Kineococcus radiotolerans (strain ATCC BAA-149 / DSM 14245 / SRS30216).